The following is a 485-amino-acid chain: Anthranilate synthase component I-like protein (485 aa).

L-tryptophan is bound by residues Ser69 and 271 to 273; that span reads PFA. 306 to 307 provides a ligand contact to chorismate; that stretch reads GT. A Mg(2+)-binding site is contributed by Glu333. Chorismate-binding positions include Arg441, 455–457, and Gly457; that span reads GAG. Glu470 contacts Mg(2+).

The protein belongs to the anthranilate synthase component I family. Tetramer of two components I and two components II. Mg(2+) is required as a cofactor.

It carries out the reaction chorismate + L-glutamine = anthranilate + pyruvate + L-glutamate + H(+). It functions in the pathway amino-acid biosynthesis; L-tryptophan biosynthesis; L-tryptophan from chorismate: step 1/5. This is Anthranilate synthase component I-like protein (trpE2) from Synechocystis sp. (strain ATCC 27184 / PCC 6803 / Kazusa).